Here is a 78-residue protein sequence, read N- to C-terminus: uncharacterized protein (78 aa).

2 helical membrane passes run 12–32 and 51–71; these read LVSVMGMGMVFAFLLLLICVV and GVGAAVPAGGALAAAIAVAVH.

It is found in the cell membrane. This is an uncharacterized protein from Treponema pallidum (strain Nichols).